A 44-amino-acid polypeptide reads, in one-letter code: Poly-ADP-ribosylation-amplifying and CtIP-maintaining micropeptide (44 aa).

Residues 1 to 44 (MAASGGTKKAQSGGRRLREPSSRPSRRARQRPRRGALRKAGRFL) form a disordered region. Positions 24–44 (PSRRARQRPRRGALRKAGRFL) are enriched in basic residues.

In terms of assembly, interacts with KLHL15; preventing ubiquitination and degradation of RBBP8/CtIP. Interacts with PARP1.

The protein resides in the nucleus. The protein localises to the nucleolus. It localises to the chromosome. Its function is as follows. Micropeptide that acts as a regulator of DNA repair both by preventing KLHL15-mediated ubiquitination and degradation of RBBP8/CtIP, and by promoting the poly-ADP-ribosyltransferase activity of PARP1. Prevents KLHL15-mediated ubiquitination of RBBP8/CtIP by competitively blocking the association between KLHL15 and RBBP8/CtIP. Recruited to DNA damage sites via association with poly-ADP-ribose chains, and enhances the poly-ADP-ribosyltransferase activity of PARP1. The sequence is that of Poly-ADP-ribosylation-amplifying and CtIP-maintaining micropeptide from Homo sapiens (Human).